Here is a 360-residue protein sequence, read N- to C-terminus: Photosystem II protein D1 3 (360 aa).

A run of 3 helical transmembrane segments spans residues 29–46 (YVGWFGVLLIPTALTAAI), 118–133 (HFLIAIYAYMGRQWEL), and 142–156 (WIPVAFSAPVAAATA). H118 lines the chlorophyll a pocket. Y126 is a pheophytin a binding site. 2 residues coordinate [CaMn4O5] cluster: D170 and E189. A helical transmembrane segment spans residues 197–218 (FHMIGVAGVFGGALFSAMHGSL). H198 provides a ligand contact to chlorophyll a. Residues H215 and 264–265 (SF) contribute to the a quinone site. A Fe cation-binding site is contributed by H215. H272 contacts Fe cation. A helical transmembrane segment spans residues 274-288 (FLAAWPVIGIWFAAL). [CaMn4O5] cluster is bound by residues H332, E333, D342, and A344. Positions 345-360 (SGEVQPIALTAPAIAS) are excised as a propeptide.

It belongs to the reaction center PufL/M/PsbA/D family. PSII is composed of 1 copy each of membrane proteins PsbA, PsbB, PsbC, PsbD, PsbE, PsbF, PsbH, PsbI, PsbJ, PsbK, PsbL, PsbM, PsbT, PsbX, PsbY, PsbZ, Psb30/Ycf12, peripheral proteins PsbO, CyanoQ (PsbQ), PsbU, PsbV and a large number of cofactors. It forms dimeric complexes. Requires The D1/D2 heterodimer binds P680, chlorophylls that are the primary electron donor of PSII, and subsequent electron acceptors. It shares a non-heme iron and each subunit binds pheophytin, quinone, additional chlorophylls, carotenoids and lipids. D1 provides most of the ligands for the Mn4-Ca-O5 cluster of the oxygen-evolving complex (OEC). There is also a Cl(-1) ion associated with D1 and D2, which is required for oxygen evolution. The PSII complex binds additional chlorophylls, carotenoids and specific lipids. as cofactor. In terms of processing, tyr-161 forms a radical intermediate that is referred to as redox-active TyrZ, YZ or Y-Z. C-terminally processed by CtpA; processing is essential to allow assembly of the oxygen-evolving complex and thus photosynthetic growth.

It is found in the cellular thylakoid membrane. The catalysed reaction is 2 a plastoquinone + 4 hnu + 2 H2O = 2 a plastoquinol + O2. In terms of biological role, photosystem II (PSII) is a light-driven water:plastoquinone oxidoreductase that uses light energy to abstract electrons from H(2)O, generating O(2) and a proton gradient subsequently used for ATP formation. It consists of a core antenna complex that captures photons, and an electron transfer chain that converts photonic excitation into a charge separation. The D1/D2 (PsbA/PsbD) reaction center heterodimer binds P680, the primary electron donor of PSII as well as several subsequent electron acceptors. This is Photosystem II protein D1 3 from Nostoc sp. (strain PCC 7120 / SAG 25.82 / UTEX 2576).